We begin with the raw amino-acid sequence, 690 residues long: DNA-directed RNA polymerase subunit beta' (690 aa).

4 residues coordinate Zn(2+): Cys-76, Cys-78, Cys-94, and Cys-97. Mg(2+) contacts are provided by Asp-496, Asp-498, and Asp-500.

It belongs to the RNA polymerase beta' chain family. RpoC1 subfamily. As to quaternary structure, in plastids the minimal PEP RNA polymerase catalytic core is composed of four subunits: alpha, beta, beta', and beta''. When a (nuclear-encoded) sigma factor is associated with the core the holoenzyme is formed, which can initiate transcription. The cofactor is Mg(2+). Requires Zn(2+) as cofactor.

The protein localises to the plastid. The protein resides in the chloroplast. It catalyses the reaction RNA(n) + a ribonucleoside 5'-triphosphate = RNA(n+1) + diphosphate. DNA-dependent RNA polymerase catalyzes the transcription of DNA into RNA using the four ribonucleoside triphosphates as substrates. This Lemna minor (Common duckweed) protein is DNA-directed RNA polymerase subunit beta'.